The primary structure comprises 357 residues: Nicotinate-nucleotide--dimethylbenzimidazole phosphoribosyltransferase (357 aa).

E323 acts as the Proton acceptor in catalysis.

This sequence belongs to the CobT family.

The catalysed reaction is 5,6-dimethylbenzimidazole + nicotinate beta-D-ribonucleotide = alpha-ribazole 5'-phosphate + nicotinate + H(+). Its pathway is nucleoside biosynthesis; alpha-ribazole biosynthesis; alpha-ribazole from 5,6-dimethylbenzimidazole: step 1/2. In terms of biological role, catalyzes the synthesis of alpha-ribazole-5'-phosphate from nicotinate mononucleotide (NAMN) and 5,6-dimethylbenzimidazole (DMB). This Nitratidesulfovibrio vulgaris (strain DP4) (Desulfovibrio vulgaris) protein is Nicotinate-nucleotide--dimethylbenzimidazole phosphoribosyltransferase.